The following is a 213-amino-acid chain: Leucine-rich repeat protein 1 (213 aa).

A signal peptide spans 1–21; that stretch reads MGAGALGVVAMVAAAVVVAMA. LRR repeat units follow at residues 90-113, 115-137, 138-161, and 163-186; these read DHLQYLELYKNNIQGTIPSELGNL, NLISLDLYKNNISGTIPPTLGKL, TSLVFLRLNGNRLTGPIPRELAGI, and SLKVVDVSSNDLCGTIPTSGPFEH.

As to quaternary structure, interacts with HIR1.

Its subcellular location is the early endosome membrane. It localises to the late endosome membrane. It is found in the cell membrane. Involved in plant defense response. The chain is Leucine-rich repeat protein 1 from Oryza sativa subsp. indica (Rice).